We begin with the raw amino-acid sequence, 417 residues long: Neuropeptide FF receptor 2 (417 aa).

Topologically, residues 1–45 are extracellular; it reads MSEKWDSNSSESWNHIWSGNDTQHHWYSDINITYVNYYLHQPQVA. 3 N-linked (GlcNAc...) asparagine glycosylation sites follow: Asn8, Asn20, and Asn31. Residues 46 to 66 form a helical membrane-spanning segment; sequence AVFISSYLLIFVLCMVGNTVV. The Cytoplasmic portion of the chain corresponds to 67 to 82; that stretch reads CFIVIRNRHMHTVTNF. Residues 83–103 form a helical membrane-spanning segment; the sequence is FILNLAISDLLVGIFCMPITL. The Extracellular segment spans residues 104 to 119; sequence LDNIIAGWPFGSSMCK. A disulfide bridge connects residues Cys118 and Cys206. Residues 120 to 140 traverse the membrane as a helical segment; it reads ISGLVQGISVAASVFTLVAIA. The Cytoplasmic portion of the chain corresponds to 141–160; the sequence is VDRFRCVVYPFKPKLTVKTA. Residues 161 to 181 form a helical membrane-spanning segment; that stretch reads FVTIVIIWGLAIAIMTPSAIM. Residues 182–217 are Extracellular-facing; that stretch reads LHVQEEKYYRVRLSSHNKTSTVYWCREDWPRHEMRR. N-linked (GlcNAc...) asparagine glycosylation is present at Asn198. Residues 218-238 traverse the membrane as a helical segment; sequence IYTTVLFATIYLAPLSLIVIM. Residues 239-274 are Cytoplasmic-facing; it reads YARIGASLFKTAAHCTGKQRPVQWHVSKKKQKVIKM. Residues 275-295 form a helical membrane-spanning segment; sequence LLTVALLFILSWLPLWTLMML. Residues 296-310 lie on the Extracellular side of the membrane; that stretch reads SDYTDLSPNKLRIIN. Residues 311-331 traverse the membrane as a helical segment; the sequence is IYIYPFAHWLAFCNSSVNPII. Residues 332 to 417 lie on the Cytoplasmic side of the membrane; that stretch reads YGFFNENFRN…MGEATNSTVA (86 aa). Residues 382 to 401 form a disordered region; sequence SQNPGGENLGCGKSADNPTQ.

This sequence belongs to the G-protein coupled receptor 1 family.

It is found in the cell membrane. Functionally, receptor for NPAF (A-18-F-amide) and NPFF (F-8-F-amide) neuropeptides, also known as morphine-modulating peptides. Can also be activated by a variety of naturally occurring or synthetic FMRF-amide like ligands. This receptor mediates its action by association with G proteins that activate a phosphatidylinositol-calcium second messenger system. In Mus musculus (Mouse), this protein is Neuropeptide FF receptor 2 (Npffr2).